A 456-amino-acid polypeptide reads, in one-letter code: Bifunctional protein GlmU (456 aa).

The interval 1 to 229 (MSSHAMSVVI…LSEVEGVNNR (229 aa)) is pyrophosphorylase. UDP-N-acetyl-alpha-D-glucosamine contacts are provided by residues 11 to 14 (LAAG), Lys25, Gln76, 81 to 82 (GT), 103 to 105 (YGD), Gly140, Glu154, Asn169, and Asn227. Asp105 contacts Mg(2+). Asn227 contacts Mg(2+). The segment at 230–250 (LQLARLEHVYQAEQAEKLLLA) is linker. The N-acetyltransferase stretch occupies residues 251 to 456 (GVMLRDPARF…QGWRRPVKKK (206 aa)). Residues Arg333 and Lys351 each coordinate UDP-N-acetyl-alpha-D-glucosamine. His363 acts as the Proton acceptor in catalysis. Residues Tyr366 and Asn377 each contribute to the UDP-N-acetyl-alpha-D-glucosamine site. Acetyl-CoA-binding positions include Ala380, 386–387 (NY), Ser405, Ala423, and Arg440.

In the N-terminal section; belongs to the N-acetylglucosamine-1-phosphate uridyltransferase family. It in the C-terminal section; belongs to the transferase hexapeptide repeat family. In terms of assembly, homotrimer. Requires Mg(2+) as cofactor.

The protein resides in the cytoplasm. It carries out the reaction alpha-D-glucosamine 1-phosphate + acetyl-CoA = N-acetyl-alpha-D-glucosamine 1-phosphate + CoA + H(+). It catalyses the reaction N-acetyl-alpha-D-glucosamine 1-phosphate + UTP + H(+) = UDP-N-acetyl-alpha-D-glucosamine + diphosphate. The protein operates within nucleotide-sugar biosynthesis; UDP-N-acetyl-alpha-D-glucosamine biosynthesis; N-acetyl-alpha-D-glucosamine 1-phosphate from alpha-D-glucosamine 6-phosphate (route II): step 2/2. It participates in nucleotide-sugar biosynthesis; UDP-N-acetyl-alpha-D-glucosamine biosynthesis; UDP-N-acetyl-alpha-D-glucosamine from N-acetyl-alpha-D-glucosamine 1-phosphate: step 1/1. Its pathway is bacterial outer membrane biogenesis; LPS lipid A biosynthesis. Catalyzes the last two sequential reactions in the de novo biosynthetic pathway for UDP-N-acetylglucosamine (UDP-GlcNAc). The C-terminal domain catalyzes the transfer of acetyl group from acetyl coenzyme A to glucosamine-1-phosphate (GlcN-1-P) to produce N-acetylglucosamine-1-phosphate (GlcNAc-1-P), which is converted into UDP-GlcNAc by the transfer of uridine 5-monophosphate (from uridine 5-triphosphate), a reaction catalyzed by the N-terminal domain. In Cronobacter sakazakii (strain ATCC BAA-894) (Enterobacter sakazakii), this protein is Bifunctional protein GlmU.